The chain runs to 541 residues: Amino-acid permease 2 (541 aa).

A compositionally biased stretch (polar residues) spans 1–22; sequence MSFSPPNKSADATIQITEMTRQ. Residues 1-43 form a disordered region; sequence MSFSPPNKSADATIQITEMTRQGTPSSGEAAASTPSTSSTESG. The segment covering 23–41 has biased composition (low complexity); the sequence is GTPSSGEAAASTPSTSSTE. 12 helical membrane passes run 66–86, 90–110, 139–159, 188–208, 214–234, 255–275, 301–321, 347–367, 399–419, 424–444, 464–484, and 496–516; these read FSFA…WIYG, GGAA…WALA, VPFL…AGGA, VVGV…LPTA, TSGY…TLLV, GWSP…WIMT, ATTF…VCMG, PAIF…IPGI, PLIA…LGLA, IGAV…IPII, VWVN…FFFP, and YAIV…YTHG.

It belongs to the amino acid-polyamine-organocation (APC) superfamily.

Its subcellular location is the membrane. This Neurospora crassa (strain ATCC 24698 / 74-OR23-1A / CBS 708.71 / DSM 1257 / FGSC 987) protein is Amino-acid permease 2 (aap-2).